Here is a 393-residue protein sequence, read N- to C-terminus: D-alanyl-D-alanine carboxypeptidase DacA (393 aa).

The first 18 residues, 1–18 (MLKRTTKIAFLSSFVALS), serve as a signal peptide directing secretion. The Acyl-ester intermediate role is filled by serine 65. The Proton acceptor role is filled by lysine 68. Serine 128 is an active-site residue. Lysine 231 is a binding site for substrate.

It belongs to the peptidase S11 family.

Its subcellular location is the cell inner membrane. The catalysed reaction is Preferential cleavage: (Ac)2-L-Lys-D-Ala-|-D-Ala. Also transpeptidation of peptidyl-alanyl moieties that are N-acyl substituents of D-alanine.. It functions in the pathway cell wall biogenesis; peptidoglycan biosynthesis. Removes C-terminal D-alanyl residues from sugar-peptide cell wall precursors. The protein is D-alanyl-D-alanine carboxypeptidase DacA (dacA) of Haemophilus influenzae (strain ATCC 51907 / DSM 11121 / KW20 / Rd).